We begin with the raw amino-acid sequence, 533 residues long: Retinoid isomerohydrolase (533 aa).

Serine 2 carries the post-translational modification N-acetylserine. 2 positions are modified to phosphothreonine: threonine 101 and threonine 105. The S-palmitoyl cysteine; in membrane form moiety is linked to residue cysteine 112. The residue at position 113 (lysine 113) is an N6-acetyllysine. Phosphoserine is present on serine 117. Histidine 180 is a Fe cation binding site. Residue cysteine 231 is the site of S-palmitoyl cysteine; in membrane form attachment. Histidine 241 and histidine 313 together coordinate Fe cation. S-palmitoyl cysteine; in membrane form attachment occurs at residues cysteine 329 and cysteine 330. Histidine 527 contributes to the Fe cation binding site.

The protein belongs to the carotenoid oxygenase family. Interacts with MYO7A; this mediates light-dependent intracellular transport of RPE65. Fe(2+) is required as a cofactor. Post-translationally, palmitoylation by LRAT regulates ligand binding specificity; the palmitoylated form (membrane form) specifically binds all-trans-retinyl-palmitate, while the soluble unpalmitoylated form binds all-trans-retinol (vitamin A). As to expression, retinal pigment epithelium specific.

It is found in the cytoplasm. The protein resides in the cell membrane. The protein localises to the microsome membrane. The catalysed reaction is an all-trans-retinyl ester + H2O = 11-cis-retinol + a fatty acid + H(+). It catalyses the reaction lutein = (3R,3'S)-zeaxanthin. The enzyme catalyses all-trans-retinyl hexadecanoate + H2O = 11-cis-retinol + hexadecanoate + H(+). Critical isomerohydrolase in the retinoid cycle involved in regeneration of 11-cis-retinal, the chromophore of rod and cone opsins. Catalyzes the cleavage and isomerization of all-trans-retinyl fatty acid esters to 11-cis-retinol which is further oxidized by 11-cis retinol dehydrogenase to 11-cis-retinal for use as visual chromophore. Essential for the production of 11-cis retinal for both rod and cone photoreceptors. Also capable of catalyzing the isomerization of lutein to meso-zeaxanthin an eye-specific carotenoid. The soluble form binds vitamin A (all-trans-retinol), making it available for LRAT processing to all-trans-retinyl ester. The membrane form, palmitoylated by LRAT, binds all-trans-retinyl esters, making them available for IMH (isomerohydrolase) processing to all-cis-retinol. The soluble form is regenerated by transferring its palmitoyl groups onto 11-cis-retinol, a reaction catalyzed by LRAT. The chain is Retinoid isomerohydrolase (RPE65) from Bos taurus (Bovine).